The chain runs to 570 residues: Spermatocyte protein spe-26 (570 aa).

Kelch repeat units lie at residues 244–291 (VLII…IVDG), 293–338 (LYLF…SVVY), 341–393 (RIYV…VFEN), 395–440 (IYVS…NHGN), 442–487 (LLIV…SYKG), and 489–535 (LFSV…VAPN).

As to expression, testis, in both spermatogonial cells and spermatocytes.

It is found in the cytoplasm. The protein resides in the cytoskeleton. In terms of biological role, may play a role in the spermatocyte cytoskeleton, possibly interacting with actin. This chain is Spermatocyte protein spe-26 (spe-26), found in Caenorhabditis elegans.